The primary structure comprises 279 residues: Protein ABIL4 (279 aa).

Disordered stretches follow at residues 192–211 and 219–241; these read VHNN…PMRF and LLKR…EPQR. A compositionally biased stretch (polar residues) spans 194–208; it reads NNINNRTPNKRSNSP. Over residues 219–228 the composition is skewed to low complexity; that stretch reads LLKRSSSPSQ.

This sequence belongs to the ABI family. As to quaternary structure, binds SCAR.

Its subcellular location is the cytoplasm. The protein localises to the cytoskeleton. In terms of biological role, involved in regulation of actin and microtubule organization. Part of a WAVE complex that activates the Arp2/3 complex. This chain is Protein ABIL4 (ABIL4), found in Arabidopsis thaliana (Mouse-ear cress).